The following is a 206-amino-acid chain: Pyrrolidone-carboxylate peptidase (206 aa).

Residues E78, C141, and H165 contribute to the active site.

The protein belongs to the peptidase C15 family. In terms of assembly, homotetramer.

It is found in the cytoplasm. The enzyme catalyses Release of an N-terminal pyroglutamyl group from a polypeptide, the second amino acid generally not being Pro.. Functionally, removes 5-oxoproline from various penultimate amino acid residues except L-proline. The chain is Pyrrolidone-carboxylate peptidase from Thermococcus kodakarensis (strain ATCC BAA-918 / JCM 12380 / KOD1) (Pyrococcus kodakaraensis (strain KOD1)).